The chain runs to 476 residues: Major facilitator superfamily domain-containing protein 12 (476 aa).

Position 1 is an N-acetylmethionine (Met-1). Over 1 to 25 the chain is Cytoplasmic; sequence MSPPSDDAGPGPPRTLSLAARLSFA. Residues 26–46 form a helical membrane-spanning segment; that stretch reads VGHFLNDLCAGMWFTYLLLFL. Residues 47–55 are Lumenal-facing; sequence HSVRGYSSR. Residues 56 to 76 traverse the membrane as a helical segment; that stretch reads GAGLLLLLGQVADGLCTPLVG. The Cytoplasmic segment spans residues 77-94; sequence YEADRASCVRCGPRKAWH. A helical transmembrane segment spans residues 95–115; sequence LAGTVCVLLSFPFIFSPCLGC. Residues 116–121 lie on the Lumenal side of the membrane; the sequence is GEATPE. The chain crosses the membrane as a helical span at residues 122–142; that stretch reads WAALLYYGPFIVVFQFGWAAT. Over 143–167 the chain is Cytoplasmic; sequence QIAHLSLIPELVTSDHEKVELTALR. A helical membrane pass occupies residues 168-188; sequence YAFTVVANITVYGAAWLLLHL. Residues 189–213 lie on the Lumenal side of the membrane; it reads QGSAHGEQDISVGDQLGVQDVPVFR. Residues 214–234 form a helical membrane-spanning segment; the sequence is NLALLVVGVGAIFSLLFHLGT. Residues 235–284 are Cytoplasmic-facing; the sequence is KEGHRSQHWGNEPNEHTPLVAPAAQPLLLWKHWLREPAFYQVGMLYMTTR. Phosphothreonine is present on Thr-251. A helical membrane pass occupies residues 285–305; sequence LIVNLSQTYIAMYLTYSLSLP. Residue Lys-306 is a topological domain, lumenal. A helical transmembrane segment spans residues 307-327; sequence KFIATIPLVMYLSGFFSSFLM. The Cytoplasmic portion of the chain corresponds to 328 to 343; that stretch reads KPVNRRIGRNMTYFTG. A run of 2 helical transmembrane segments spans residues 344–364 and 365–385; these read LLVILAFAAWVALADNLGVAV and YGAAVLLGAGCATILVTSLAM. Topologically, residues 386–398 are cytoplasmic; sequence TADLIGPHTHSGA. The helical transmembrane segment at 399-419 threads the bilayer; the sequence is FVYGAMSFSDKVANGLAVMAV. Over 420–444 the chain is Lumenal; that stretch reads QSLHPCPSELCCGACISFYHWVMTA. A helical membrane pass occupies residues 445–465; the sequence is VTGGVGVAAALALCSLLIWPI. Topologically, residues 466-476 are cytoplasmic; it reads RIRNRDPRDRP.

The protein belongs to the major facilitator superfamily. Phosphorylation at Thr-251 by MTOR via mTORC1 pathway promotes cysteine transport in lysosomes, thereby regulating lysosomal cysteine and cystine storage and redox homeostasis.

The protein resides in the melanosome membrane. It is found in the lysosome membrane. The enzyme catalyses L-cysteine(in) = L-cysteine(out). Transporter that mediates the import of cysteine into melanosomes, thereby regulating skin/hair pigmentation. In melanosomes, cysteine import is required both for normal levels of cystine, the oxidized dimer of cysteine, and provide cysteine for the production of the cysteinyldopas used in pheomelanin synthesis, thereby regulating skin/hair pigmentation. Also catalyzes import of cysteine into lysosomes in non-pigmented cells, regulating lysosomal cystine and cysteine storage, which is essnetial for redox homeostasis. The polypeptide is Major facilitator superfamily domain-containing protein 12 (Mus musculus (Mouse)).